The primary structure comprises 55 residues: uncharacterized protein (55 aa).

The interval 1–22 is disordered; that stretch reads MPALKSHVRPNSAAPARRQPWP.

This is an uncharacterized protein from Rhodobacter capsulatus (Rhodopseudomonas capsulata).